The sequence spans 202 residues: Securin (202 aa).

The segment at 1–92 (MATLIYVDKE…QKQPSFSAKK (92 aa)) is disordered. A2 bears the N-acetylalanine mark. Positions 61–64 (RKAL) match the D-box motif. Short sequence motifs (TEK-box) lie at residues 71–73 (TEK) and 94–96 (TEK). Positions 163–173 (XPSPVKMPSPP) match the SH3-binding motif. S165 carries the phosphoserine; by CDK1 modification.

This sequence belongs to the securin family. As to quaternary structure, interacts with RPS10 and DNAJA1. Interacts with the caspase-like ESPL1, and prevents its protease activity probably by covering its active site. Interacts with TP53 and blocks its activity probably by blocking its binding to DNA. Interacts with the Ku 70 kDa subunit of ds-DNA kinase. Interacts with PTTG1IP. In terms of processing, phosphorylated at Ser-165 by CDK1 during mitosis. Phosphorylated in vitro by ds-DNA kinase. Post-translationally, ubiquitinated through 'Lys-11' linkage of ubiquitin moieties by the anaphase promoting complex (APC) at the onset of anaphase, conducting to its degradation. 'Lys-11'-linked ubiquitination is mediated by the E2 ligase UBE2C/UBCH10.

The protein resides in the cytoplasm. It localises to the nucleus. Regulatory protein, which plays a central role in chromosome stability, in the p53/TP53 pathway, and DNA repair. Probably acts by blocking the action of key proteins. During the mitosis, it blocks Separase/ESPL1 function, preventing the proteolysis of the cohesin complex and the subsequent segregation of the chromosomes. At the onset of anaphase, it is ubiquitinated, conducting to its destruction and to the liberation of ESPL1. Its function is however not limited to a blocking activity, since it is required to activate ESPL1. Negatively regulates the transcriptional activity and related apoptosis activity of TP53. The negative regulation of TP53 may explain the strong transforming capability of the protein when it is overexpressed. May also play a role in DNA repair via its interaction with Ku, possibly by connecting DNA damage-response pathways with sister chromatid separation. In Pan troglodytes (Chimpanzee), this protein is Securin (PTTG1).